Consider the following 66-residue polypeptide: FMRFamide-like neuropeptides 24 (66 aa).

Residues 1 to 22 (MSRTSIILVLAIFVAIAAIAQC) form the signal peptide. The propeptide occupies 23-48 (RNIQYDVDEISPEAAFRYAQWGEIPH). F61 bears the Phenylalanine amide mark. A propeptide spanning residues 65–66 (SV) is cleaved from the precursor.

The protein belongs to the FARP (FMRFamide related peptide) family.

The protein resides in the secreted. In terms of biological role, FMRFamides and FMRFamide-like peptides are neuropeptides. This chain is FMRFamide-like neuropeptides 24, found in Caenorhabditis briggsae.